Reading from the N-terminus, the 881-residue chain is Envelope glycoprotein gp160 (881 aa).

An N-terminal signal peptide occupies residues 1–19 (MGCLGNQLLIAILLLSVYG). The Extracellular portion of the chain corresponds to 20-696 (IYCTQYVTVF…ASWIKYIQYG (677 aa)). An N-linked (GlcNAc...) asparagine; by host glycan is attached at asparagine 37. Residues cysteine 44 and cysteine 57 are joined by a disulfide bond. N-linked (GlcNAc...) asparagine; by host glycosylation is found at asparagine 70, asparagine 114, asparagine 148, asparagine 158, asparagine 186, asparagine 200, asparagine 204, asparagine 214, asparagine 246, asparagine 249, asparagine 280, asparagine 286, asparagine 297, asparagine 308, asparagine 318, asparagine 373, and asparagine 379. 5 cysteine pairs are disulfide-bonded: cysteine 101-cysteine 222, cysteine 108-cysteine 213, cysteine 113-cysteine 170, cysteine 235-cysteine 265, and cysteine 245-cysteine 257. Residues 113–169 (CNKSETDRWGLTKSSTTITTAAPTSAPVSEKIDMVNETSSCIAQNNCTGLEQEQMIS) form a V1 region. Positions 170–213 (CKFTMTGLKRDKTKEYNETWYSTDLVCEQGNSTDNESRCYMNHC) are V2. A V3 region spans residues 313–345 (CRRPGNKTVLPVTIMSGLVFHSQPINDRPKQAW). A disulfide bond links cysteine 313 and cysteine 346. Cystine bridges form between cysteine 397/cysteine 461 and cysteine 404/cysteine 434. Positions 404–434 (CKMNWFLNWVEDRDVTTQRPKERHRRNYVPC) are V4. Residues asparagine 462 and asparagine 478 are each glycosylated (N-linked (GlcNAc...) asparagine; by host). A V5 region spans residues 477 to 484 (GNQTSITM). A fusion peptide region spans residues 528 to 548 (GVFVLGFLGFLATAGSAMGAA). Residues 591–607 (LQTRVTAIEKYLKDQAQ) are immunosuppression. Residues asparagine 627, asparagine 636, and asparagine 652 are each glycosylated (N-linked (GlcNAc...) asparagine; by host). A coiled-coil region spans residues 636-668 (NDTWQEWERKVDFLEENITALLEEAQIQQEKNM). The tract at residues 673–694 (KLNSWDVFGNWFDLASWIKYIQ) is MPER; binding to GalCer. Residues 697-717 (IYVVVGVILLRIVIYIVQMLA) form a helical membrane-spanning segment. At 718–881 (KLRQGYRPVF…IRQGLELTLL (164 aa)) the chain is on the cytoplasmic side. A YXXV motif; contains endocytosis signal motif is present at residues 723–726 (YRPV). Residues 737 to 761 (THTQQDPALPTREGKEGDGGEGGGN) form a disordered region. Cysteine 789 carries the S-palmitoyl cysteine; by host lipid modification. The Di-leucine internalization motif signature appears at 880-881 (LL).

In terms of assembly, the mature envelope protein (Env) consists of a homotrimer of non-covalently associated gp120-gp41 heterodimers. The resulting complex protrudes from the virus surface as a spike. Interacts with host CD4 and CCR5. Gp120 also interacts with the C-type lectins CD209/DC-SIGN and CLEC4M/DC-SIGNR (collectively referred to as DC-SIGN(R)). As to quaternary structure, the mature envelope protein (Env) consists of a homotrimer of non-covalently associated gp120-gp41 heterodimers. The resulting complex protrudes from the virus surface as a spike. In terms of processing, specific enzymatic cleavages in vivo yield mature proteins. Envelope glycoproteins are synthesized as an inactive precursor that is heavily N-glycosylated and processed likely by host cell furin in the Golgi to yield the mature SU and TM proteins. The cleavage site between SU and TM requires the minimal sequence [KR]-X-[KR]-R. Post-translationally, palmitoylation of the transmembrane protein and of Env polyprotein (prior to its proteolytic cleavage) is essential for their association with host cell membrane lipid rafts. Palmitoylation is therefore required for envelope trafficking to classical lipid rafts, but not for viral replication.

It localises to the virion membrane. It is found in the host cell membrane. The protein localises to the host endosome membrane. Functionally, the surface protein gp120 (SU) attaches the virus to the host lymphoid cell by binding to the primary receptor CD4. This interaction induces a structural rearrangement creating a high affinity binding site for a chemokine coreceptor like CCR5. This peculiar 2 stage receptor-interaction strategy allows gp120 to maintain the highly conserved coreceptor-binding site in a cryptic conformation, protected from neutralizing antibodies. These changes are transmitted to the transmembrane protein gp41 and are thought to activate its fusogenic potential by unmasking its fusion peptide. Surface protein gp120 (SU) may target the virus to gut-associated lymphoid tissue (GALT) by binding host ITGA4/ITGB7 (alpha-4/beta-7 integrins), a complex that mediates T-cell migration to the GALT. Interaction between gp120 and ITGA4/ITGB7 would allow the virus to enter GALT early in the infection, infecting and killing most of GALT's resting CD4+ T-cells. This T-cell depletion is believed to be the major insult to the host immune system leading to AIDS. In terms of biological role, the surface protein gp120 is a ligand for CD209/DC-SIGN and CLEC4M/DC-SIGNR, which are respectively found on dendritic cells (DCs), and on endothelial cells of liver sinusoids and lymph node sinuses. These interactions allow capture of viral particles at mucosal surfaces by these cells and subsequent transmission to permissive cells. DCs are professional antigen presenting cells, critical for host immunity by inducing specific immune responses against a broad variety of pathogens. They act as sentinels in various tissues where they take up antigen, process it, and present it to T-cells following migration to lymphoid organs. SIV subverts the migration properties of dendritic cells to gain access to CD4+ T-cells in lymph nodes. Virus transmission to permissive T-cells occurs either in trans (without DCs infection, through viral capture and transmission), or in cis (following DCs productive infection, through the usual CD4-gp120 interaction), thereby inducing a robust infection. In trans infection, bound virions remain infectious over days and it is proposed that they are not degraded, but protected in non-lysosomal acidic organelles within the DCs close to the cell membrane thus contributing to the viral infectious potential during DCs' migration from the periphery to the lymphoid tissues. On arrival at lymphoid tissues, intact virions recycle back to DCs' cell surface allowing virus transmission to CD4+ T-cells. Virion capture also seems to lead to MHC-II-restricted viral antigen presentation, and probably to the activation of SIV-specific CD4+ cells. Its function is as follows. The transmembrane protein gp41 (TM) acts as a class I viral fusion protein. Under the current model, the protein has at least 3 conformational states: pre-fusion native state, pre-hairpin intermediate state, and post-fusion hairpin state. During fusion of viral and target intracellular membranes, the coiled coil regions (heptad repeats) assume a trimer-of-hairpins structure, positioning the fusion peptide in close proximity to the C-terminal region of the ectodomain. The formation of this structure appears to drive apposition and subsequent fusion of viral and target cell membranes. Complete fusion occurs in host cell endosomes. The virus undergoes clathrin-dependent internalization long before endosomal fusion, thus minimizing the surface exposure of conserved viral epitopes during fusion and reducing the efficacy of inhibitors targeting these epitopes. Membranes fusion leads to delivery of the nucleocapsid into the cytoplasm. Functionally, the envelope glycoprotein gp160 precursor down-modulates cell surface CD4 antigen by interacting with it in the endoplasmic reticulum and blocking its transport to the cell surface. The gp120-gp41 heterodimer allows rapid transcytosis of the virus through CD4 negative cells such as simple epithelial monolayers of the intestinal, rectal and endocervical epithelial barriers. Both gp120 and gp41 specifically recognize glycosphingolipids galactosyl-ceramide (GalCer) or 3' sulfo-galactosyl-ceramide (GalS) present in the lipid rafts structures of epithelial cells. Binding to these alternative receptors allows the rapid transcytosis of the virus through the epithelial cells. This transcytotic vesicle-mediated transport of virions from the apical side to the basolateral side of the epithelial cells does not involve infection of the cells themselves. The protein is Envelope glycoprotein gp160 (env) of Cercopithecidae (Old World monkeys).